Reading from the N-terminus, the 294-residue chain is Equatorin (294 aa).

The signal sequence occupies residues 1–14 (MNFILFIFIPGVFS). Topologically, residues 15-181 (LKSSTLKPTI…QPDLEDLKIK (167 aa)) are vesicular. A glycan (N-linked (GlcNAc...) asparagine) is linked at Asn76. The tract at residues 107 to 126 (KSTIEEETTTSEPSHKNIQR) is disordered. Asn143 carries N-linked (GlcNAc...) asparagine glycosylation. Residues 182-202 (IMLGISLMTLLLFVVLLAFCS) form a helical membrane-spanning segment. The Cytoplasmic portion of the chain corresponds to 203–294 (ATLYKLRHLS…MHENDESVTR (92 aa)).

In terms of assembly, interacts with SNAP25. Post-translationally, highly N- and O-glycosylated; contains sialic acid. As to expression, isoform 1 is highly expressed in testis. Isoform 2 is expressed at low levels in skin and blood.

The protein localises to the cytoplasmic vesicle. The protein resides in the secretory vesicle. It is found in the acrosome membrane. Its subcellular location is the acrosome inner membrane. It localises to the acrosome outer membrane. Functionally, acrosomal membrane-anchored protein involved in the process of fertilization and in acrosome biogenesis. The polypeptide is Equatorin (EQTN) (Homo sapiens (Human)).